The chain runs to 205 residues: Small ribosomal subunit protein uS4 (205 aa).

The interval 25-48 (KTIEARPTPPGQHGAKNTRRKKSD) is disordered. In terms of domain architecture, S4 RNA-binding spans 94–157 (RRLDNVVFRA…TKLPIVVETL (64 aa)).

Belongs to the universal ribosomal protein uS4 family. Part of the 30S ribosomal subunit. Contacts protein S5. The interaction surface between S4 and S5 is involved in control of translational fidelity.

Its function is as follows. One of the primary rRNA binding proteins, it binds directly to 16S rRNA where it nucleates assembly of the body of the 30S subunit. In terms of biological role, with S5 and S12 plays an important role in translational accuracy. This Methylobacillus flagellatus (strain ATCC 51484 / DSM 6875 / VKM B-1610 / KT) protein is Small ribosomal subunit protein uS4.